We begin with the raw amino-acid sequence, 161 residues long: Globin CTT-VIIB-4 (161 aa).

The first 16 residues, 1–16 (MKFFAVLALCIVGAIA), serve as a signal peptide directing secretion. Residues 18–161 (PLTADEASLV…NTMAVAVAHL (144 aa)) enclose the Globin domain. Heme b is bound by residues H76 and H111.

It belongs to the globin family. In terms of assembly, homodimer.

The polypeptide is Globin CTT-VIIB-4 (CTT-7B4) (Chironomus thummi thummi (Midge)).